The primary structure comprises 222 residues: Peptide methionine sulfoxide reductase MsrA (222 aa).

The active site involves C60.

It belongs to the MsrA Met sulfoxide reductase family.

The catalysed reaction is L-methionyl-[protein] + [thioredoxin]-disulfide + H2O = L-methionyl-(S)-S-oxide-[protein] + [thioredoxin]-dithiol. It carries out the reaction [thioredoxin]-disulfide + L-methionine + H2O = L-methionine (S)-S-oxide + [thioredoxin]-dithiol. Has an important function as a repair enzyme for proteins that have been inactivated by oxidation. Catalyzes the reversible oxidation-reduction of methionine sulfoxide in proteins to methionine. This Pseudomonas entomophila (strain L48) protein is Peptide methionine sulfoxide reductase MsrA.